The sequence spans 368 residues: Probable acetylxylan esterase A (368 aa).

Residues 1 to 19 (MRALSVFFALFCFLALSSA) form the signal peptide. A propeptide spanning residues 20–28 (SPGQDVVKR) is cleaved from the precursor. Positions 32–304 (GSLQQVTNFG…GEQDMEWFGF (273 aa)) are catalytic. The Charge relay system role is filled by Ser-149. A glycan (N-linked (GlcNAc...) asparagine) is linked at Asn-191. The segment at 305-333 (AGGSSTTTTQPTTTSTTTSSGGSSTGTGV) is ser/Thr-rich linker. The disordered stretch occupies residues 306–330 (GGSSTTTTQPTTTSTTTSSGGSSTG). The segment covering 307–330 (GSSTTTTQPTTTSTTTSSGGSSTG) has biased composition (low complexity). The 37-residue stretch at 332-368 (GVAAHWGQCGGNGWTGPTVCASGYTCTVVNAWYSQCL) folds into the CBM1 domain.

The protein belongs to the carbohydrate esterase 1 (CE1) family. AxeA subfamily. In terms of assembly, monomer.

The protein localises to the secreted. It catalyses the reaction Deacetylation of xylans and xylo-oligosaccharides.. The protein operates within glycan degradation; xylan degradation. In terms of biological role, acetylxylan esterase involved in the hydrolysis of xylan, a major structural heterogeneous polysaccharide found in plant biomass representing the second most abundant polysaccharide in the biosphere, after cellulose. Degrades acetylated xylans by cleaving acetyl side groups from the hetero-xylan backbone. In Neosartorya fischeri (strain ATCC 1020 / DSM 3700 / CBS 544.65 / FGSC A1164 / JCM 1740 / NRRL 181 / WB 181) (Aspergillus fischerianus), this protein is Probable acetylxylan esterase A (axeA).